The chain runs to 510 residues: NAD(P)H-quinone oxidoreductase subunit 2, chloroplastic (510 aa).

The next 12 membrane-spanning stretches (helical) occupy residues 24-44 (LLLFHGSFIFPECILIFGLIL), 59-79 (WFYFISSTSLVMSITALLFRW), 99-119 (IFQFLILLCSTLCIPLSVEYI), 124-144 (MAITEFLLFVLTATLGGMFLC), 149-169 (FITIFVAPECFSLCSYLLSGY), 183-203 (YLLMGGASSSILVHGFSWLYG), 229-249 (ISIALISITVGIGFKLSPAPF), 295-315 (WHLLLEILAILSMILGNLIAI), 323-343 (MLAYSSIGQIGYVIIGIIVGD), 347-367 (GYASMITYMLFYISMNLGTFA), 395-415 (ALSLALCLLSLGGLPPLAGFF), and 418-438 (LHLFWCGWQAGLYFLVSIGLL).

Belongs to the complex I subunit 2 family. NDH is composed of at least 16 different subunits, 5 of which are encoded in the nucleus.

It localises to the plastid. The protein resides in the chloroplast thylakoid membrane. The enzyme catalyses a plastoquinone + NADH + (n+1) H(+)(in) = a plastoquinol + NAD(+) + n H(+)(out). It carries out the reaction a plastoquinone + NADPH + (n+1) H(+)(in) = a plastoquinol + NADP(+) + n H(+)(out). Its function is as follows. NDH shuttles electrons from NAD(P)H:plastoquinone, via FMN and iron-sulfur (Fe-S) centers, to quinones in the photosynthetic chain and possibly in a chloroplast respiratory chain. The immediate electron acceptor for the enzyme in this species is believed to be plastoquinone. Couples the redox reaction to proton translocation, and thus conserves the redox energy in a proton gradient. This Phormium tenax (New Zealand flax) protein is NAD(P)H-quinone oxidoreductase subunit 2, chloroplastic.